A 398-amino-acid chain; its full sequence is Acetate kinase (398 aa).

Residue Asn8 coordinates Mg(2+). Residue Lys15 coordinates ATP. A substrate-binding site is contributed by Arg89. Asp146 acts as the Proton donor/acceptor in catalysis. ATP is bound by residues 206 to 210 (HIGNG), 283 to 285 (DMR), and 331 to 335 (GMGEN). Mg(2+) is bound at residue Glu383.

It belongs to the acetokinase family. As to quaternary structure, homodimer. Requires Mg(2+) as cofactor. Mn(2+) serves as cofactor.

It localises to the cytoplasm. It catalyses the reaction acetate + ATP = acetyl phosphate + ADP. It functions in the pathway metabolic intermediate biosynthesis; acetyl-CoA biosynthesis; acetyl-CoA from acetate: step 1/2. Its function is as follows. Catalyzes the formation of acetyl phosphate from acetate and ATP. Can also catalyze the reverse reaction. The polypeptide is Acetate kinase (Streptococcus pyogenes serotype M49 (strain NZ131)).